Consider the following 538-residue polypeptide: Capsular polysaccharide biosynthesis protein RkpI (538 aa).

The next 6 membrane-spanning stretches (helical) occupy residues 16-36 (LHDY…AVIF), 70-90 (VIAL…YAAA), 114-134 (LVFS…IFYA), 139-159 (IVFW…YMYF), 170-190 (LFWV…LFYG), and 212-232 (NTVR…WLGV).

Its subcellular location is the cell membrane. Its pathway is capsule biogenesis; capsule polysaccharide biosynthesis. Involved in antigen K (capsular polysaccharide) biosynthesis. The chain is Capsular polysaccharide biosynthesis protein RkpI (rkpI) from Rhizobium meliloti (strain 1021) (Ensifer meliloti).